A 497-amino-acid polypeptide reads, in one-letter code: MAGGIEITFEPLSSRGTGGDLVVFVGDDLALSGAASEALGQPGTELVARAAASERFKGKAQSALVLPAPAGVEADRLVVIGLGSEKDRAKIDWTVLGGFTAGKVGARSARVVIDGPGFAASARDVADFTLGARLRSYRFDQYKTKKKDEDEAGAALTLRVADPSGAQAAARSAEAVAEGVILARNLVNEPPNVLYPEEYARRVSELTQLGVEVEILDVARMKEIGMGALLAVAQGSAREPRVVIMRWNGADDAAEPPLALIGKGVVFDSGGVSIKSAGGMEDMKGDMGGSAAVVGTLHALASRKAKANVIGAIGIVENMPDGAAYRPSDIVTSLSGQTIEVINTDAEGRLVLADVLWHIQATYKPKAMIDLATLTGAIIVALGQDIAGLFSNDDALSGQITAAGEAAGEKVWRMPLIPAFDKAIDSKFADMKNTGGRHGGAATAAAFLKRYVNDVPWAHLDIAGVGMSSTPSEINRSWGAGWGVRLLDRLVREHYER.

Residues lysine 263 and aspartate 268 each contribute to the Mn(2+) site. The active site involves lysine 275. Aspartate 286, aspartate 345, and glutamate 347 together coordinate Mn(2+). Arginine 349 is a catalytic residue.

This sequence belongs to the peptidase M17 family. Mn(2+) is required as a cofactor.

The protein resides in the cytoplasm. The catalysed reaction is Release of an N-terminal amino acid, Xaa-|-Yaa-, in which Xaa is preferably Leu, but may be other amino acids including Pro although not Arg or Lys, and Yaa may be Pro. Amino acid amides and methyl esters are also readily hydrolyzed, but rates on arylamides are exceedingly low.. The enzyme catalyses Release of an N-terminal amino acid, preferentially leucine, but not glutamic or aspartic acids.. Presumably involved in the processing and regular turnover of intracellular proteins. Catalyzes the removal of unsubstituted N-terminal amino acids from various peptides. The chain is Probable cytosol aminopeptidase from Methylorubrum extorquens (strain CM4 / NCIMB 13688) (Methylobacterium extorquens).